The chain runs to 2151 residues: MEKYREIHRDLQSFPVGSLTAVECIDYLDRLYAIRHDIVDQMIKHDWSDNKDSEESIGKVLLFAGVPNNVITAMEKKIIPDHPSGKTLRSFFKMTPDNYKITGSTIEFVEVTVTVDVDKGIREKRLKYEAGLKYIEQELHNHFLRGDIPQPYKITFQVVSVRTDGSNISTQWPSRRNDGVVQYMRLVQAEISYVREHLIRQEERAALEAMFNLKFNISNIKNQPYYIPDYRGIPLIHPNINDLVVYMRDWLSKSHKFSFHEGKVPAVFDCFNENELEHAVKYPISRHPRNFLLIQCSLLSSYNPATILSDQVDSRRACNSVLNLIPETPTSFLIHDMAYRYINLTREDMVSFYAPKTQFIPTQNVKEPGTFKLTANSMRPESKAMLDMLGSHEPGEKKGALIESLNLSSHIVQSECVSLITKILSDLELNISEPTSHGSFTTKHTYVDNVLEKFFQNEIQRYLLDVLKKTTAWHIGHLIRDITESLIAHSGLKRSKYWSVHAYNNGNVILFILPSKSLEVAGSYIRFVTVFRMGPGLVDKDNLDTILTDQDVTWGVSKVMSIDLNRLLALNIAFEKALIATATWFQYYTEDQGQFPLQHAIRSVFAYHLLLAVCQKMKLCAIFDNLRYLIPAVTSLYSGFPSLINKLFERPFKSALEVYVYYNIKSLLVALAQNNKARFYSKVKLLGLTVDQSTVGASGIYPSFMSRVIYKHYRSLISEVTTCFFLFEKGLHGNMNEEAKIHLETVEWALKFRQKEDQYGESMVENGYTIGELNDNQDLVEQQLYCQDAVELAAVELNKILSTKSQVVANSILNKYWEVPYFSQTRNISLKGMSGQVQEDGHLAASVTIIEAIRYLSSSQNNPSVLQLYEETRKVKAQARIVRKYQRTEADRGFFITTLPTRCRLEIIEDYYDAISKNVAEEYISYGGERKILCIQSALEKALRWASGESFIELSNGKFIRMKRKLMYVSADATKWSPGDNSAKFRRFTAALHNGLPDDRLKNCVIDALRNVYKTDFYMSRKLRAYIDNMNGHEPAVKNFLEFFPDGHCGEVRGNWLQGNLNKCSSLFGVGMSLLFKQLWNELFPELDCFFEFAHHSDDALFIYGYLEPIDDGTDWFLYVSQQIQAGHLHWFSVNTEMWKSMFNLHEHVLLLGSIKISPKKTTLSPTNAEFLSTFFESCAVSIPFIKILLGSLSDLPGLGYFDDLAAAQSRCVKAMDLGASPQVAQLAVALCTNKVERLYGTAVGMIKHPSTYLQVKHGDTPIPLGGSGAMSIMELATAGIGMSDKNLLKRALLGYIHKRQKNMAYILGLFKFLMNLSKDTFQHERLGEFSFIGKVQWKIFIPKSEFEFFDMYTPKFLKLWSEQHVTYDYIIPKGRDNLLIYLVRKINDPSIVTAMTMQSPLQLRFRMQAKQHMKVCKLDDDWVTFREILAAANSFAQLYEVTQEDLDLFQTLTSCTFSKEYAWKDFLNGVQCDVIPTKQIQRAKVARTFTVREKDQIIQNSIPAVIGYKFAVTVDEMSDVLDSAKFPDSLAVDLKTMKDGVYRELGLDISQAEVMKKVAPMLYKSSKSRVVIVQGNVEGTAEAICGYWLRTMSLVKTIRVKPHKEVLKAVSIFNRKEDIGQQKDLAALRLCIEVWRWCKANNAPYQEWFHALWFEDKTFSEWLDRFIRVGVPPVDPEIQCAALMIADIRGDLSVLQVQANRRAYSGKQYDAYCVQTYNEETKLYEGDLRVTFNFGLDCARLEIFWDKQTYILETSITQKHVLKIMMDEVTKELLRCGMRFKTEQVSNVKHLVLFKTEAGFEWGKPNIPCIVYKNCALRTGLRANQTVNHKFMISIKDNGLRAIAQYDDESPRFLLAHAFHTIRDIRYQAVDAVSNVWFIHKGIKLFLNPIISSGLLENFMKNLPAAIPPAAYSLIMNRAKISVDLFMFNDLLRLINPSNTLDLSGLQPTEDGFSTVSSMSSRLWSEEVSFVDEDEEIDDEFTIDLQDVDFENIDVEADIEHFLQDESSYTGDLLIMSEETEVKKMRGIIKLLEPVRLIKSWVSKGLCIEKVYSPTNIILMTRYLSKNFNFSGRQVSLLDPYDLTEFESIVKGWGECVVDQFSTFDQETQLLVSQKGICPEDVVPDSLFSFRHTIVLLRRLFPQDSVSTFY.

Residues H36, E54, D97, E110, and V111 each coordinate Mn(2+). K124 serves as the catalytic For endonuclease activity. One can recognise a RdRp catalytic domain in the interval 956–1142 (NGKFIRMKRK…SVNTEMWKSM (187 aa)). D1099 serves as a coordination point for Mg(2+).

Belongs to the Bunyavirales RNA polymerase family. In terms of assembly, interacts with the viral nucleoprotein. It depends on Mn(2+) as a cofactor. The cofactor is Mg(2+).

Its subcellular location is the host cytoplasm. The protein localises to the host perinuclear region. The catalysed reaction is RNA(n) + a ribonucleoside 5'-triphosphate = RNA(n+1) + diphosphate. RNA-dependent RNA polymerase, which is responsible for the replication and transcription of the viral RNA genome using antigenomic RNA as an intermediate. During transcription, synthesizes subgenomic RNAs and assures their capping by a cap-snatching mechanism, which involves the endonuclease activity cleaving the host capped pre-mRNAs. These short capped RNAs are then used as primers for viral transcription. Cleaves ssRNA substrates but not DNA. Seems to downregulate the expression of its own and heterologous mRNAs through its endonuclease activity. The protein is RNA-directed RNA polymerase L of Apodemus agrarius (Eurasian field mouse).